The chain runs to 149 residues: Oligosaccharyltransferase complex subunit ostc-B (149 aa).

Over 1-32 (MESLYRIPFTVLECPNLKLKKPSWLHMPSAMT) the chain is Cytoplasmic. Residues 33 to 53 (VYAMVVVSYFLITGGIIYDVI) traverse the membrane as a helical segment. At 54–83 (VEPPSVGSMTDEHGHQRPVAFLAYRVNGQY) the chain is on the extracellular side. The chain crosses the membrane as a helical span at residues 84-104 (IMEGLASSFLFTMGGLGFIIL). Residues 105 to 117 (DRSNAPNIPKLNR) lie on the Cytoplasmic side of the membrane. The helical transmembrane segment at 118–138 (FLLLFIGFVCVLLSFFMARVF) threads the bilayer. At 139–149 (MRMKLPGYLMG) the chain is on the extracellular side.

The protein belongs to the OSTC family. In terms of assembly, specific component of the STT3A-containing form of the oligosaccharyltransferase (OST) complex.

The protein localises to the membrane. Its pathway is protein modification; protein glycosylation. Its function is as follows. Specific component of the STT3A-containing form of the oligosaccharyl transferase (OST) complex that catalyzes the initial transfer of a defined glycan (Glc(3)Man(9)GlcNAc(2) in eukaryotes) from the lipid carrier dolichol-pyrophosphate to an asparagine residue within an Asn-X-Ser/Thr consensus motif in nascent polypeptide chains, the first step in protein N-glycosylation. N-glycosylation occurs cotranslationally and the complex associates with the Sec61 complex at the channel-forming translocon complex that mediates protein translocation across the endoplasmic reticulum (ER). All subunits are required for a maximal enzyme activity. The protein is Oligosaccharyltransferase complex subunit ostc-B of Xenopus laevis (African clawed frog).